Reading from the N-terminus, the 397-residue chain is CCA-adding enzyme (397 aa).

Residues Gly26 and Arg29 each contribute to the ATP site. Gly26 and Arg29 together coordinate CTP. Mg(2+) contacts are provided by Asp39 and Asp41. ATP-binding residues include Arg110, Asp153, Arg156, Arg159, and Arg162. Positions 110, 153, 156, 159, and 162 each coordinate CTP.

Belongs to the tRNA nucleotidyltransferase/poly(A) polymerase family. Bacterial CCA-adding enzyme type 3 subfamily. Homodimer. The cofactor is Mg(2+).

It carries out the reaction a tRNA precursor + 2 CTP + ATP = a tRNA with a 3' CCA end + 3 diphosphate. The enzyme catalyses a tRNA with a 3' CCA end + 2 CTP + ATP = a tRNA with a 3' CCACCA end + 3 diphosphate. Functionally, catalyzes the addition and repair of the essential 3'-terminal CCA sequence in tRNAs without using a nucleic acid template. Adds these three nucleotides in the order of C, C, and A to the tRNA nucleotide-73, using CTP and ATP as substrates and producing inorganic pyrophosphate. tRNA 3'-terminal CCA addition is required both for tRNA processing and repair. Also involved in tRNA surveillance by mediating tandem CCA addition to generate a CCACCA at the 3' terminus of unstable tRNAs. While stable tRNAs receive only 3'-terminal CCA, unstable tRNAs are marked with CCACCA and rapidly degraded. In Bacillus cytotoxicus (strain DSM 22905 / CIP 110041 / 391-98 / NVH 391-98), this protein is CCA-adding enzyme.